The following is a 68-amino-acid chain: uncharacterized protein (68 aa).

Transmembrane regions (helical) follow at residues 1-21 (MLFI…YFLP) and 28-48 (VHFS…LSSV).

The protein resides in the cell membrane. This is an uncharacterized protein from Haemophilus influenzae (strain ATCC 51907 / DSM 11121 / KW20 / Rd).